We begin with the raw amino-acid sequence, 218 residues long: Ras-related protein Rab-11B (218 aa).

Glycine 2 carries the N-acetylglycine modification. Citrulline is present on arginine 4. The GTP site is built by serine 20, glycine 21, glycine 23, lysine 24, serine 25, asparagine 26, asparagine 37, leucine 38, serine 40, serine 42, and threonine 43. Serine 25 contributes to the Mg(2+) binding site. The Switch 1 motif lies at 36 to 47 (FNLESKSTIGVE). Residues threonine 43 and aspartate 66 each coordinate Mg(2+). A Switch 2 motif is present at residues 67–86 (TAGQERYRAITSAYYRGAVG). Residues glycine 69, asparagine 124, lysine 125, aspartate 127, alanine 155, and leucine 156 each coordinate GTP. A disordered region spans residues 184–218 (RAAHDESPGNNVVDISVPPTTDGQKPNKLQCCQNL). 2 S-geranylgeranyl cysteine lipidation sites follow: cysteine 214 and cysteine 215. Cysteine 215 carries the post-translational modification Cysteine methyl ester. Positions 216–218 (QNL) are cleaved as a propeptide — removed in mature form.

The protein belongs to the small GTPase superfamily. Rab family. In terms of assembly, interacts with KCNMA1. Interacts with RAB11FIP1, RAB11FIP2, RAB11FIP3 and RAB11FIP4. May interact with TBC1D14. Interacts with ATP6V1E1. Interacts with PI4KB. Interacts (GDP-bound form) with ZFYVE27. Interacts (GDP-bound form) with KIF5A in a ZFYVE27-dependent manner. Interacts with RELCH. Interacts (in GTP-bound form) with TBC1D8B (via domain Rab-GAP TBC). Forms a complex containing RAB11B, ASAP1, Rabin8/RAB3IP, RAP11FIP3 and ARF4. Interacts with WDR44. Mg(2+) serves as cofactor. In terms of processing, citrullinated by PADI4. Post-translationally, (Microbial infection) Glycosylated on arginine residues by S.typhimurium protein Ssek3.

It localises to the recycling endosome membrane. It is found in the cytoplasmic vesicle. Its subcellular location is the secretory vesicle. The protein resides in the synaptic vesicle membrane. The protein localises to the phagosome membrane. It catalyses the reaction GTP + H2O = GDP + phosphate + H(+). Its activity is regulated as follows. Regulated by guanine nucleotide exchange factors (GEFs) which promote the exchange of bound GDP for free GTP. Regulated by GTPase activating proteins (GAPs) which increase the GTP hydrolysis activity. Inhibited by GDP dissociation inhibitors (GDIs) which prevent Rab-GDP dissociation. Its function is as follows. The small GTPases Rab are key regulators of intracellular membrane trafficking, from the formation of transport vesicles to their fusion with membranes. Rabs cycle between an inactive GDP-bound form and an active GTP-bound form that is able to recruit to membranes different set of downstream effectors directly responsible for vesicle formation, movement, tethering and fusion. The small Rab GTPase RAB11B plays a role in endocytic recycling, regulating apical recycling of several transmembrane proteins including cystic fibrosis transmembrane conductance regulator/CFTR, epithelial sodium channel/ENaC, potassium voltage-gated channel, and voltage-dependent L-type calcium channel. May also regulate constitutive and regulated secretion, like insulin granule exocytosis. Required for melanosome transport and release from melanocytes. Also regulates V-ATPase intracellular transport in response to extracellular acidosis. Promotes Rabin8/RAB3IP preciliary vesicular trafficking to mother centriole by forming a ciliary targeting complex containing Rab11, ASAP1, Rabin8/RAB3IP, RAB11FIP3 and ARF4, thereby regulating ciliogenesis initiation. On the contrary, upon LPAR1 receptor signaling pathway activation, interaction with phosphorylated WDR44 prevents Rab11-RAB3IP-RAB11FIP3 complex formation and cilia growth. In Homo sapiens (Human), this protein is Ras-related protein Rab-11B.